We begin with the raw amino-acid sequence, 391 residues long: 3-ketoacyl-CoA thiolase (391 aa).

Cys-95 serves as the catalytic Acyl-thioester intermediate. Active-site proton acceptor residues include His-347 and Cys-377.

Belongs to the thiolase-like superfamily. Thiolase family. Heterotetramer of two alpha chains (FadB) and two beta chains (FadA).

The protein resides in the cytoplasm. It catalyses the reaction an acyl-CoA + acetyl-CoA = a 3-oxoacyl-CoA + CoA. Its pathway is lipid metabolism; fatty acid beta-oxidation. In terms of biological role, catalyzes the final step of fatty acid oxidation in which acetyl-CoA is released and the CoA ester of a fatty acid two carbons shorter is formed. In Pseudomonas putida (Arthrobacter siderocapsulatus), this protein is 3-ketoacyl-CoA thiolase.